The following is a 133-amino-acid chain: MAKASNTAAQRVRKKVKKNVAEGVVHVHASFNNTIITITDRQGNALAWATSGGQGFKGSRKSTPFAAQVAAESAGRVAMEYGVKNLEVRIKGPGPGRESAVRALHGLGIKITAISDVTPIPHNGCRPPKRRRI.

It belongs to the universal ribosomal protein uS11 family. In terms of assembly, part of the 30S ribosomal subunit. Interacts with proteins S7 and S18. Binds to IF-3.

Functionally, located on the platform of the 30S subunit, it bridges several disparate RNA helices of the 16S rRNA. Forms part of the Shine-Dalgarno cleft in the 70S ribosome. This Burkholderia pseudomallei (strain 1106a) protein is Small ribosomal subunit protein uS11.